The following is a 303-amino-acid chain: Elongation factor Ts (303 aa).

The interval T80–V83 is involved in Mg(2+) ion dislocation from EF-Tu.

It belongs to the EF-Ts family.

The protein localises to the cytoplasm. Associates with the EF-Tu.GDP complex and induces the exchange of GDP to GTP. It remains bound to the aminoacyl-tRNA.EF-Tu.GTP complex up to the GTP hydrolysis stage on the ribosome. The chain is Elongation factor Ts from Clostridium perfringens (strain ATCC 13124 / DSM 756 / JCM 1290 / NCIMB 6125 / NCTC 8237 / Type A).